A 273-amino-acid chain; its full sequence is 4-hydroxy-tetrahydrodipicolinate reductase (273 aa).

NAD(+) is bound by residues 12 to 17 (GAGGRM) and glutamate 38. Arginine 39 is a binding site for NADP(+). NAD(+) is bound by residues 102–104 (GTT) and 126–129 (AANF). Histidine 159 acts as the Proton donor/acceptor in catalysis. Histidine 160 is a (S)-2,3,4,5-tetrahydrodipicolinate binding site. Residue lysine 163 is the Proton donor of the active site. A (S)-2,3,4,5-tetrahydrodipicolinate-binding site is contributed by 169 to 170 (GT).

It belongs to the DapB family. In terms of assembly, homotetramer.

The protein resides in the cytoplasm. It carries out the reaction (S)-2,3,4,5-tetrahydrodipicolinate + NAD(+) + H2O = (2S,4S)-4-hydroxy-2,3,4,5-tetrahydrodipicolinate + NADH + H(+). The enzyme catalyses (S)-2,3,4,5-tetrahydrodipicolinate + NADP(+) + H2O = (2S,4S)-4-hydroxy-2,3,4,5-tetrahydrodipicolinate + NADPH + H(+). Its pathway is amino-acid biosynthesis; L-lysine biosynthesis via DAP pathway; (S)-tetrahydrodipicolinate from L-aspartate: step 4/4. Its function is as follows. Catalyzes the conversion of 4-hydroxy-tetrahydrodipicolinate (HTPA) to tetrahydrodipicolinate. The chain is 4-hydroxy-tetrahydrodipicolinate reductase from Klebsiella pneumoniae subsp. pneumoniae (strain ATCC 700721 / MGH 78578).